Here is a 399-residue protein sequence, read N- to C-terminus: Tyrosine--tRNA ligase (399 aa).

Residues 42–51 (PTAPDLHLGH) carry the 'HIGH' region motif. Positions 226–230 (KMSKS) match the 'KMSKS' region motif. Lysine 229 is an ATP binding site. In terms of domain architecture, S4 RNA-binding spans 336 to 396 (MPIAAVLNKA…GKKAFARITL (61 aa)).

It belongs to the class-I aminoacyl-tRNA synthetase family. TyrS type 2 subfamily. Homodimer.

It is found in the cytoplasm. The catalysed reaction is tRNA(Tyr) + L-tyrosine + ATP = L-tyrosyl-tRNA(Tyr) + AMP + diphosphate + H(+). Catalyzes the attachment of tyrosine to tRNA(Tyr) in a two-step reaction: tyrosine is first activated by ATP to form Tyr-AMP and then transferred to the acceptor end of tRNA(Tyr). This Pseudomonas fluorescens (strain Pf0-1) protein is Tyrosine--tRNA ligase.